The sequence spans 507 residues: MATLRADEISNIIRERIEQYTREVKVVNTGTVLQVGDGIARIHGLDEVMAGELVEFEEGTIGIALNLESNNVGVVLMGDGLTIQEGSSVKATGRIAQIPVSEAYLGRVVNALAKPIDGRGEIAASEFRLIESPAPGIISRRSVYEPLQTGLIAIDSMIPVGRGQRELIIGDRQTGKTAVATDTILNQKGQNVICVYVAIGQKASSVAQVVTNFQERGAMEYTIVVAETADSPATLQYLAPYTGAALAEYFMYRERHTSIIYDDLSKQAQAYRQMSLLLRRPPGREAYPGDVFYLHSRLLERAAKSSSRLGEGSMTALPIVETQSGDVSAYIPTNVISITDGQIFLSADLFNAGIRPAINVGISVSRVGSAAQIKAMKQVAGKSKLELAQFAELEAFAQFASDLDKATQNQLARGKRLRELLKQSQSEPLAVDEQVVTIYTGTNGYLDTLEIGQVKEFLVKLRTYLKKNKPQFQEIISSTKTFTEEAEALLKEAIQEQLELFLLQEQT.

170–177 contacts ATP; that stretch reads GDRQTGKT.

It belongs to the ATPase alpha/beta chains family. In terms of assembly, F-type ATPases have 2 components, CF(1) - the catalytic core - and CF(0) - the membrane proton channel. CF(1) has five subunits: alpha(3), beta(3), gamma(1), delta(1), epsilon(1). CF(0) has four main subunits: a, b, b' and c.

It is found in the plastid. The protein resides in the chloroplast thylakoid membrane. It carries out the reaction ATP + H2O + 4 H(+)(in) = ADP + phosphate + 5 H(+)(out). In terms of biological role, produces ATP from ADP in the presence of a proton gradient across the membrane. The alpha chain is a regulatory subunit. In Acorus calamus var. americanus (American sweet flag), this protein is ATP synthase subunit alpha, chloroplastic.